A 548-amino-acid chain; its full sequence is ATP synthase subunit alpha (548 aa).

172–179 (GDRKTGKT) is an ATP binding site. Residues 510 to 548 (QFTTSSGESAAPSEPEAEALAADEVGQETVKVNRPAPKK) form a disordered region. Over residues 514 to 531 (SSGESAAPSEPEAEALAA) the composition is skewed to low complexity.

The protein belongs to the ATPase alpha/beta chains family. In terms of assembly, F-type ATPases have 2 components, CF(1) - the catalytic core - and CF(0) - the membrane proton channel. CF(1) has five subunits: alpha(3), beta(3), gamma(1), delta(1), epsilon(1). CF(0) has three main subunits: a(1), b(2) and c(9-12). The alpha and beta chains form an alternating ring which encloses part of the gamma chain. CF(1) is attached to CF(0) by a central stalk formed by the gamma and epsilon chains, while a peripheral stalk is formed by the delta and b chains.

The protein resides in the cell membrane. It carries out the reaction ATP + H2O + 4 H(+)(in) = ADP + phosphate + 5 H(+)(out). In terms of biological role, produces ATP from ADP in the presence of a proton gradient across the membrane. The alpha chain is a regulatory subunit. The protein is ATP synthase subunit alpha of Saccharopolyspora erythraea (strain ATCC 11635 / DSM 40517 / JCM 4748 / NBRC 13426 / NCIMB 8594 / NRRL 2338).